Here is a 405-residue protein sequence, read N- to C-terminus: Acetate kinase (405 aa).

Mg(2+) is bound at residue N7. K14 provides a ligand contact to ATP. R99 is a substrate binding site. The active-site Proton donor/acceptor is D156. 215–219 (HLGNG) is a binding site for ATP. E391 is a binding site for Mg(2+).

It belongs to the acetokinase family. As to quaternary structure, homodimer. It depends on Mg(2+) as a cofactor. Requires Mn(2+) as cofactor.

The protein resides in the cytoplasm. It carries out the reaction acetate + ATP = acetyl phosphate + ADP. The protein operates within metabolic intermediate biosynthesis; acetyl-CoA biosynthesis; acetyl-CoA from acetate: step 1/2. Its function is as follows. Catalyzes the formation of acetyl phosphate from acetate and ATP. Can also catalyze the reverse reaction. The polypeptide is Acetate kinase (Nostoc sp. (strain PCC 7120 / SAG 25.82 / UTEX 2576)).